We begin with the raw amino-acid sequence, 332 residues long: MSKLPLLPTTVIGSYPRPKWLRESIRLHKAGKISDEDLQEAFSDAVIAVLKDHYNAGVDVPTDGEVRRDEMVEFFAERIKGFKFYGPVRVWGTAYYRKPSVVSKIEYKKPMLVDEFTFAKSVSYTDNLKITITGPYTIAEWSYNEYYKNKKDLVFDLAKAINQEIKNLVEAGAKIIQIDEPALHTRREDVSWGVEAVNEAVKGVNAKLVMHICYGEYSFVAPYLNELKVDQINFAFKIYNYKPLELLKRYGFDKELGAGVIDVHNRRIETSEEVANDIRKILEYFTPEKVWINPDCGLKLLSRKIAYQKLVSMVEGTKVVREELKRKGYSVD.

Zn(2+) contacts are provided by histidine 211, cysteine 213, and cysteine 296.

Belongs to the archaeal MetE family. It depends on Zn(2+) as a cofactor.

Its pathway is amino-acid biosynthesis; L-methionine biosynthesis via de novo pathway. Its function is as follows. Catalyzes the transfer of a methyl group to L-homocysteine resulting in methionine formation. The physiological methyl donor is unknown. The sequence is that of Methionine synthase from Saccharolobus islandicus (strain Y.N.15.51 / Yellowstone #2) (Sulfolobus islandicus).